Reading from the N-terminus, the 106-residue chain is Biogenesis of lysosome-related organelles complex 1 subunit 4 (106 aa).

A coiled-coil region spans residues 53–106 (THSEGLSEQLKMTEKNILEMENLFDQIDQLCLFVQKAKSDLDKLEKLYNVVDRQ).

The protein belongs to the BLOC1S4 family. In terms of assembly, component of the biogenesis of lysosome-related organelles complex-1 (BLOC-1) composed at least of blos-1, blos-2, blos-4, dsbn-1, glo-2, mutd-1 and snpn-1. Interacts with glo-2.

Its function is as follows. Component of the biogenesis of lysosome-related organelles complex-1 (BLOC-1) involved in gut granule biogenesis. The polypeptide is Biogenesis of lysosome-related organelles complex 1 subunit 4 (blos-4) (Caenorhabditis elegans).